The following is a 143-amino-acid chain: Large ribosomal subunit protein uL11 (143 aa).

It belongs to the universal ribosomal protein uL11 family. As to quaternary structure, part of the ribosomal stalk of the 50S ribosomal subunit. Interacts with L10 and the large rRNA to form the base of the stalk. L10 forms an elongated spine to which L12 dimers bind in a sequential fashion forming a multimeric L10(L12)X complex. Post-translationally, one or more lysine residues are methylated.

Its function is as follows. Forms part of the ribosomal stalk which helps the ribosome interact with GTP-bound translation factors. This is Large ribosomal subunit protein uL11 from Rhizobium rhizogenes (strain K84 / ATCC BAA-868) (Agrobacterium radiobacter).